A 298-amino-acid chain; its full sequence is NFU1 iron-sulfur cluster scaffold homolog, mitochondrial (298 aa).

Residues 190 to 258 form a nifU region; that stretch reads IKELLDTRIR…IPEVESVEQV (69 aa). [4Fe-4S] cluster contacts are provided by Cys227 and Cys230. A compositionally biased stretch (polar residues) spans 279–288; it reads QKESVNQPNA. Residues 279-298 are disordered; that stretch reads QKESVNQPNAPVNIGGGTPN.

Belongs to the NifU family.

It is found in the mitochondrion. In terms of biological role, molecular scaffold for [Fe-S] cluster assembly of mitochondrial iron-sulfur proteins. In Drosophila virilis (Fruit fly), this protein is NFU1 iron-sulfur cluster scaffold homolog, mitochondrial.